The following is a 159-amino-acid chain: Ribosomal RNA large subunit methyltransferase H (159 aa).

S-adenosyl-L-methionine contacts are provided by residues Leu76, Gly108, and 127-132 (FGRLTL).

The protein belongs to the RNA methyltransferase RlmH family. As to quaternary structure, homodimer.

The protein localises to the cytoplasm. It carries out the reaction pseudouridine(1915) in 23S rRNA + S-adenosyl-L-methionine = N(3)-methylpseudouridine(1915) in 23S rRNA + S-adenosyl-L-homocysteine + H(+). Functionally, specifically methylates the pseudouridine at position 1915 (m3Psi1915) in 23S rRNA. The chain is Ribosomal RNA large subunit methyltransferase H from Streptococcus uberis (strain ATCC BAA-854 / 0140J).